The chain runs to 106 residues: Integration host factor subunit alpha (106 aa).

The protein belongs to the bacterial histone-like protein family. As to quaternary structure, heterodimer of an alpha and a beta chain.

Its function is as follows. This protein is one of the two subunits of integration host factor, a specific DNA-binding protein that functions in genetic recombination as well as in transcriptional and translational control. The polypeptide is Integration host factor subunit alpha (Paramagnetospirillum magneticum (strain ATCC 700264 / AMB-1) (Magnetospirillum magneticum)).